Reading from the N-terminus, the 162-residue chain is Caveolin-2 (162 aa).

Residues 1–86 (MGLETEKTDV…FEISKYVMYK (86 aa)) lie on the Cytoplasmic side of the membrane. At Tyr19 the chain carries Phosphotyrosine; by SRC. A phosphoserine mark is found at Ser20 and Ser23. Tyr27 is modified (phosphotyrosine; by SRC). Ser36 carries the post-translational modification Phosphoserine. Residues 87-107 (FLTVFLAIPLAFLAGILFATL) constitute an intramembrane region (helical). Residues 108-162 (SCLHIWIIMPFVKTCLMVLPSVQTIWKSVTDAIVAPLCTSIGRSFSSVSLQLSQD) lie on the Cytoplasmic side of the membrane.

The protein belongs to the caveolin family. As to quaternary structure, monomer or homodimer. Interacts with CAV1; the interaction forms a stable heterooligomeric complex that is required for targeting to lipid rafts and for caveolae formation. Tyrosine phosphorylated forms do not form heterooligomers with the Tyr-19-phosphorylated form existing as a monomer or dimer, and the Tyr-27-form as a monomer only. Interacts (tyrosine phosphorylated form) with the SH2 domain-containing proteins, RASA1, NCK1 and SRC. Interacts (tyrosine phosphorylated form) with INSR, the interaction (Tyr-27-phosphorylated form) is increased on insulin stimulation. Interacts (Tyr-19 phosphorylated form) with MAPK1 (phosphorylated form); the interaction, promoted by insulin, leads to nuclear location and MAPK1 activation. Interacts with STAT3; the interaction is increased on insulin-induced tyrosine phosphorylation leading to STAT activation. Post-translationally, phosphorylated on serine and tyrosine residues. CAV1 promotes phosphorylation on Ser-23 which then targets the complex to the plasma membrane, lipid rafts and caveolae. Phosphorylation on Ser-36 appears to modulate mitosis in endothelial cells. Phosphorylation on both Tyr-19 and Tyr-27 is required for insulin-induced 'Ser-727' phosphorylation of STAT3 and its activation. Phosphorylation on Tyr-19 is required for insulin-induced phosphorylation of MAPK1 and DNA binding of STAT3. Tyrosine phosphorylation is induced by both EGF and insulin (By. similarity).

The protein resides in the nucleus. It localises to the cytoplasm. The protein localises to the golgi apparatus membrane. Its subcellular location is the cell membrane. It is found in the membrane. The protein resides in the caveola. May act as a scaffolding protein within caveolar membranes. Interacts directly with G-protein alpha subunits and can functionally regulate their activity. Acts as an accessory protein in conjunction with CAV1 in targeting to lipid rafts and driving caveolae formation. The Ser-36 phosphorylated form has a role in modulating mitosis in endothelial cells. Positive regulator of cellular mitogenesis of the MAPK signaling pathway. Required for the insulin-stimulated nuclear translocation and activation of MAPK1 and STAT3, and the subsequent regulation of cell cycle progression. This chain is Caveolin-2 (CAV2), found in Aotus nancymaae (Ma's night monkey).